The following is a 355-amino-acid chain: MKTDPNKEKALNAVLSQIEKQFGKGSIMKLGEDRSMDVETISTGSLSLDVALGAGGLPMGRIVEIYGPESSGKTTLTLEVIAAAQKQGKTCAFIDAEHALDPIYAKKLGVDIDNLLCSQPDTGEQALEICDALTRSGAVDVIVVDSVAALTPKAEIEGEIGDSHMGLAARMMSQAMRKLAGNLKQSNTLLIFINQIRMKIGVMFGNPETTTGGNALKFYASVRLDIRRTGAIKDREEVIGNETRVKVVKNKIAAPFKQAEFQILYGQGINSTGELVDLGVQHKLIEKSGAWYAYKGNKIGQGRANAGKYLIENPEVSDEIETTLRAMLLGNGEKIAPDAADTAGDNVDLETGEVF.

Residue 67 to 74 (GPESSGKT) participates in ATP binding.

The protein belongs to the RecA family.

Its subcellular location is the cytoplasm. In terms of biological role, can catalyze the hydrolysis of ATP in the presence of single-stranded DNA, the ATP-dependent uptake of single-stranded DNA by duplex DNA, and the ATP-dependent hybridization of homologous single-stranded DNAs. It interacts with LexA causing its activation and leading to its autocatalytic cleavage. In Shewanella halifaxensis (strain HAW-EB4), this protein is Protein RecA.